The primary structure comprises 476 residues: Aspartyl/glutamyl-tRNA(Asn/Gln) amidotransferase subunit B (476 aa).

It belongs to the GatB/GatE family. GatB subfamily. As to quaternary structure, heterotrimer of A, B and C subunits.

The catalysed reaction is L-glutamyl-tRNA(Gln) + L-glutamine + ATP + H2O = L-glutaminyl-tRNA(Gln) + L-glutamate + ADP + phosphate + H(+). The enzyme catalyses L-aspartyl-tRNA(Asn) + L-glutamine + ATP + H2O = L-asparaginyl-tRNA(Asn) + L-glutamate + ADP + phosphate + 2 H(+). In terms of biological role, allows the formation of correctly charged Asn-tRNA(Asn) or Gln-tRNA(Gln) through the transamidation of misacylated Asp-tRNA(Asn) or Glu-tRNA(Gln) in organisms which lack either or both of asparaginyl-tRNA or glutaminyl-tRNA synthetases. The reaction takes place in the presence of glutamine and ATP through an activated phospho-Asp-tRNA(Asn) or phospho-Glu-tRNA(Gln). In Clostridium botulinum (strain Okra / Type B1), this protein is Aspartyl/glutamyl-tRNA(Asn/Gln) amidotransferase subunit B.